The primary structure comprises 130 residues: Small ribosomal subunit protein uS9 (130 aa).

It belongs to the universal ribosomal protein uS9 family.

This is Small ribosomal subunit protein uS9 from Bacillus anthracis (strain A0248).